The sequence spans 85 residues: Putative regulatory protein DICTH_1339 (85 aa).

It belongs to the RemA family.

This is Putative regulatory protein DICTH_1339 from Dictyoglomus thermophilum (strain ATCC 35947 / DSM 3960 / H-6-12).